A 270-amino-acid chain; its full sequence is GTP cyclohydrolase FolE2 (270 aa).

The protein belongs to the GTP cyclohydrolase IV family.

It carries out the reaction GTP + H2O = 7,8-dihydroneopterin 3'-triphosphate + formate + H(+). Its pathway is cofactor biosynthesis; 7,8-dihydroneopterin triphosphate biosynthesis; 7,8-dihydroneopterin triphosphate from GTP: step 1/1. Its function is as follows. Converts GTP to 7,8-dihydroneopterin triphosphate. This chain is GTP cyclohydrolase FolE2, found in Cupriavidus pinatubonensis (strain JMP 134 / LMG 1197) (Cupriavidus necator (strain JMP 134)).